We begin with the raw amino-acid sequence, 132 residues long: Small ribosomal subunit protein uS8 (132 aa).

The protein belongs to the universal ribosomal protein uS8 family. In terms of assembly, part of the 30S ribosomal subunit. Contacts proteins S5 and S12.

Its function is as follows. One of the primary rRNA binding proteins, it binds directly to 16S rRNA central domain where it helps coordinate assembly of the platform of the 30S subunit. In Saccharopolyspora erythraea (strain ATCC 11635 / DSM 40517 / JCM 4748 / NBRC 13426 / NCIMB 8594 / NRRL 2338), this protein is Small ribosomal subunit protein uS8.